The primary structure comprises 705 residues: MAPAVGIDLGTTYSCVGIFRDDRIEIIANDQGNRTTPSFVAFTDTERLIGDAAKNQVAMNPANTVFDAKRLIGRKFADPEVQADMKHFPFKITDKGGKPVIQVEFKGETKEFTPEEISSMVLTKMRETAEAYLGGTVNNAVVTVPAYFNDSQRQATKDAGLIAGLNVLRIINEPTAAAIAYGLDKKADGERNVLIFDLGGGTFDVSLLTIEEGIFEVKSTAGDTHLGGEDFDNRLVNHFVSEFKRKFKKISPAERARALRRSPTACERAKRTLSSAAQTSIEIDSLYEGIDFYTSITRARFEELCQDLFRSTMEPVERVLRDAKIDKSSVHEIVLVGGSTRIPRIQKLVSDFFNGKEPNKSINPDEAVAYGAAVQAAILSGDTSSKSTNEILLLDVAPLSLGIETAGGVMTPLIKRNTTIPTKKSETFSTFSDNQPGVLIQVFEGERARTKDNNLLGKFELTGIPRARGVPQIEVTFDVDANGIMNVSALEKGTRKTNKIVITNDKGRLSKEEIERMLAEAEKYKAEDEAEASRIRPKNGLESYAYSLRNSLRHSKVDEKLEAGDKEKLKSEIDKTVQWLDENQTATKEEYESQQKELEAVANPIMMKFYAGGEGAPGGFPGAGGPGGFPGGPGAGHASGGGDDGPTVEEVDLKFPMLPLPWQLSVRKMHRPFFLFLLFLIFLIFLILFLFYFFLPVRFNESCFS.

Gly residues predominate over residues 624 to 644 (GGPGGFPGGPGAGHASGGGDD). The tract at residues 624 to 645 (GGPGGFPGGPGAGHASGGGDDG) is disordered.

The protein belongs to the heat shock protein 70 family.

The protein is Heat shock 70 kDa protein (HSP70) of Ajellomyces capsulatus (Darling's disease fungus).